Reading from the N-terminus, the 319-residue chain is Urease accessory protein UreD (319 aa).

The disordered stretch occupies residues 298–319; that stretch reads QEQPLPPSSFKTNTAVPAVRTH.

The protein belongs to the UreD family. As to quaternary structure, ureD, UreF and UreG form a complex that acts as a GTP-hydrolysis-dependent molecular chaperone, activating the urease apoprotein by helping to assemble the nickel containing metallocenter of UreC. The UreE protein probably delivers the nickel.

It localises to the cytoplasm. Required for maturation of urease via the functional incorporation of the urease nickel metallocenter. The polypeptide is Urease accessory protein UreD (Synechococcus sp. (strain WH7805)).